The primary structure comprises 137 residues: Large ribosomal subunit protein uL16 (137 aa).

It belongs to the universal ribosomal protein uL16 family. As to quaternary structure, part of the 50S ribosomal subunit.

In terms of biological role, binds 23S rRNA and is also seen to make contacts with the A and possibly P site tRNAs. The sequence is that of Large ribosomal subunit protein uL16 from Xanthomonas campestris pv. campestris (strain 8004).